The chain runs to 81 residues: uncharacterized protein (81 aa).

The signal sequence occupies residues 1-16 (MNRLTFYGLCLSGAVG). A disordered region spans residues 55–81 (TIDPHHNHHDDHHDSHGHGHGKIKGHH). Basic and acidic residues predominate over residues 57–71 (DPHHNHHDDHHDSHG). Over residues 72–81 (HGHGKIKGHH) the composition is skewed to basic residues.

The protein localises to the secreted. This is an uncharacterized protein from Dictyostelium discoideum (Social amoeba).